Here is a 334-residue protein sequence, read N- to C-terminus: Hemin transport system permease protein HmuU (334 aa).

The next 9 membrane-spanning stretches (helical) occupy residues 9-29 (LMLG…ANMG), 60-80 (LLAV…QGLF), 96-116 (AALC…LLAL), 117-137 (YSHM…IFTL), 149-169 (LLAG…LTYI), 191-211 (WSTL…GLLQ), 244-264 (AILI…GLVV), 278-298 (WLLP…DTLA), and 306-326 (EMPV…WLIL).

The protein belongs to the binding-protein-dependent transport system permease family. FecCD subfamily.

It is found in the cell inner membrane. Functionally, part of the binding-protein-dependent transport system for hemin; probably responsible for the translocation of the substrate across the membrane. In Yersinia pestis, this protein is Hemin transport system permease protein HmuU (hmuU).